A 181-amino-acid polypeptide reads, in one-letter code: MKLLFDFFPIVLFFIVYKFFGIYTATAVAMVASLTQVAFYRLKFQHYEKMHLFSLAIIMVLGGATLFFQNPWFIKWKPTGIYWLSALVFYGSGYIGSKPLIQKMMEANINLTTKIWYRLNLAWTLFFIVMGALNLYVAYHYDTDVWVNFKLFGGVGFTLLFVLIQAFYLTKHTDEKSFEKQ.

The next 5 helical transmembrane spans lie at 3–23 (LLFDFFPIVLFFIVYKFFGIY), 54–74 (SLAIIMVLGGATLFFQNPWFI), 81–101 (IYWLSALVFYGSGYIGSKPLI), 119–139 (LNLAWTLFFIVMGALNLYVAY), and 149–169 (FKLFGGVGFTLLFVLIQAFYL).

The protein belongs to the YciB family.

The protein localises to the cell inner membrane. Its function is as follows. Plays a role in cell envelope biogenesis, maintenance of cell envelope integrity and membrane homeostasis. The sequence is that of Inner membrane-spanning protein YciB from Legionella pneumophila (strain Corby).